The following is a 216-amino-acid chain: Octanoyltransferase (216 aa).

A BPL/LPL catalytic domain is found at 29–209 (DRAGECVWLL…SFDAVFGPCP (181 aa)). Substrate contacts are provided by residues 68 to 75 (RGGQYTYH), 140 to 142 (AIG), and 153 to 155 (GFA). Cys171 acts as the Acyl-thioester intermediate in catalysis.

The protein belongs to the LipB family.

The protein localises to the cytoplasm. It carries out the reaction octanoyl-[ACP] + L-lysyl-[protein] = N(6)-octanoyl-L-lysyl-[protein] + holo-[ACP] + H(+). It participates in protein modification; protein lipoylation via endogenous pathway; protein N(6)-(lipoyl)lysine from octanoyl-[acyl-carrier-protein]: step 1/2. Its function is as follows. Catalyzes the transfer of endogenously produced octanoic acid from octanoyl-acyl-carrier-protein onto the lipoyl domains of lipoate-dependent enzymes. Lipoyl-ACP can also act as a substrate although octanoyl-ACP is likely to be the physiological substrate. The chain is Octanoyltransferase from Rhodospirillum rubrum (strain ATCC 11170 / ATH 1.1.1 / DSM 467 / LMG 4362 / NCIMB 8255 / S1).